The chain runs to 96 residues: uncharacterized protein (96 aa).

This is an uncharacterized protein from Enterobacteria phage T4 (Bacteriophage T4).